A 155-amino-acid chain; its full sequence is MNKFTNLLIKRTASSLKGGDFRELFRKNYIPITQFEKVLLSVTSCVEGLKNPTDSNSVACITELTSNRALRKLQILMNSTPDGRRIIKNRPLIDSSKYSIKDLMAFPDDSLGRRYGEFLTTYNLEIDRAPVRYVNSEDLAYVLTRFRQVSLNDYK.

It belongs to the COQ4 family. Component of a multi-subunit COQ enzyme complex. The cofactor is Zn(2+).

The protein localises to the mitochondrion inner membrane. It carries out the reaction a 4-hydroxy-3-methoxy-5-(all-trans-polyprenyl)benzoate + H(+) = a 2-methoxy-6-(all-trans-polyprenyl)phenol + CO2. It participates in cofactor biosynthesis; ubiquinone biosynthesis. Functionally, lyase that catalyzes the C1-decarboxylation of 4-hydroxy-3-methoxy-5-(all-trans-polyprenyl)benzoic acid into 2-methoxy-6-(all-trans-polyprenyl)phenol during ubiquinone biosynthesis. This is Ubiquinone biosynthesis protein COQ4 homolog, mitochondrial from Cryptosporidium hominis.